The primary structure comprises 669 residues: Pre-mRNA-processing factor 39 (669 aa).

Residues 1–10 show a composition bias toward basic and acidic residues; the sequence is MQNSHMDEYR. A disordered region spans residues 1 to 23; it reads MQNSHMDEYRNSSNGSTGNSSEV. Low complexity predominate over residues 11–23; the sequence is NSSNGSTGNSSEV. A Phosphoserine modification is found at serine 44. HAT repeat units follow at residues 109-141, 143-175, 183-218, 220-253, 333-365, 367-399, and 404-436; these read NHLM…LEKR, DNIK…FLKE, ETNN…WENE, GNLR…HVQN, TFEE…FEIE, GTHE…YMEN, and GVRH…QQGN. Basic and acidic residues predominate over residues 599-624; the sequence is KEQDSLKRKAENGSEEPEEKKAHTED. Residues 599–634 form a disordered region; sequence KEQDSLKRKAENGSEEPEEKKAHTEDTTSSSTQMID. Over residues 625 to 634 the composition is skewed to polar residues; that stretch reads TTSSSTQMID.

Belongs to the PRP39 family.

The protein localises to the nucleus. In terms of biological role, involved in pre-mRNA splicing. This chain is Pre-mRNA-processing factor 39 (PRPF39), found in Homo sapiens (Human).